The following is a 238-amino-acid chain: Survival of motor neuron-related-splicing factor 30 (238 aa).

Positions 72 to 132 constitute a Tudor domain; it reads SWKVGDKCMA…KPVEEGRKAK (61 aa). The Nuclear localization signal signature appears at 142–160; it reads KKEMIAQQREYKKKKALKK. Serine 201 bears the Phosphoserine mark. At lysine 219 the chain carries N6-acetyllysine.

Belongs to the SMN family. In terms of assembly, associates with spliceosomes. Associates with U4/U5/U6 tri-snRNP and with U2 snRNP.

It is found in the nucleus speckle. It localises to the nucleus. The protein resides in the cajal body. Involved in spliceosome assembly. This chain is Survival of motor neuron-related-splicing factor 30 (SMNDC1), found in Pongo abelii (Sumatran orangutan).